The chain runs to 356 residues: Histidinol-phosphate aminotransferase (356 aa).

Residue lysine 222 is modified to N6-(pyridoxal phosphate)lysine.

Belongs to the class-II pyridoxal-phosphate-dependent aminotransferase family. Histidinol-phosphate aminotransferase subfamily. As to quaternary structure, homodimer. Pyridoxal 5'-phosphate is required as a cofactor.

It carries out the reaction L-histidinol phosphate + 2-oxoglutarate = 3-(imidazol-4-yl)-2-oxopropyl phosphate + L-glutamate. It functions in the pathway amino-acid biosynthesis; L-histidine biosynthesis; L-histidine from 5-phospho-alpha-D-ribose 1-diphosphate: step 7/9. The chain is Histidinol-phosphate aminotransferase from Lactiplantibacillus plantarum (strain ATCC BAA-793 / NCIMB 8826 / WCFS1) (Lactobacillus plantarum).